A 306-amino-acid chain; its full sequence is MNAKAAQSLFGAIASSKKAPTREEPAVNFKSTNESLIKKNLQLKQQLSQCTKALEKLRNENIALREQNQELIDATLDEKMERIVEQRVKSRLAHAAVLHKKLVQNIQQTGLELGGIFKDMEPEPSGMVTRRAPKMECNLEKLDESPVRNFPRSDYEEENKSPMDIQNGPSSSSSMTQNLENGTPRMAQRASKGRRSELFHSLHENVPEEAAPAVGYKRAPLLIAPSETPGGPPKKAPPRKAPTPRFKKPSTPAPAPISDDAEMPSTVRRQRSAKMNIKSMKEPSVNSKLRRPGKHDEPMPFIDTFF.

The stretch at 28 to 75 (NFKSTNESLIKKNLQLKQQLSQCTKALEKLRNENIALREQNQELIDAT) forms a coiled coil. 2 disordered regions span residues 122–196 (PEPS…GRRS) and 223–306 (IAPS…DTFF). Residues 133-161 (PKMECNLEKLDESPVRNFPRSDYEEENKS) are compositionally biased toward basic and acidic residues. Polar residues predominate over residues 167-181 (NGPSSSSSMTQNLEN). Residues 230–241 (GGPPKKAPPRKA) are compositionally biased toward pro residues.

This sequence belongs to the shugoshin family.

Its subcellular location is the nucleus. It localises to the chromosome. It is found in the centromere. Its function is as follows. Plays a central role in chromosome cohesion during cell division by preventing premature dissociation of cohesin complex from centromeres after prophase, when most of cohesin complex dissociates from chromosomes arms. The protein is Shugoshin (sgo-1) of Caenorhabditis briggsae.